The following is a 978-amino-acid chain: Glycine dehydrogenase (decarboxylating) (978 aa).

Lysine 726 bears the N6-(pyridoxal phosphate)lysine mark.

Belongs to the GcvP family. The glycine cleavage system is composed of four proteins: P, T, L and H. Pyridoxal 5'-phosphate serves as cofactor.

It carries out the reaction N(6)-[(R)-lipoyl]-L-lysyl-[glycine-cleavage complex H protein] + glycine + H(+) = N(6)-[(R)-S(8)-aminomethyldihydrolipoyl]-L-lysyl-[glycine-cleavage complex H protein] + CO2. Its function is as follows. The glycine cleavage system catalyzes the degradation of glycine. The P protein binds the alpha-amino group of glycine through its pyridoxal phosphate cofactor; CO(2) is released and the remaining methylamine moiety is then transferred to the lipoamide cofactor of the H protein. In Paraburkholderia phytofirmans (strain DSM 17436 / LMG 22146 / PsJN) (Burkholderia phytofirmans), this protein is Glycine dehydrogenase (decarboxylating).